The chain runs to 196 residues: Imidazoleglycerol-phosphate dehydratase (196 aa).

This sequence belongs to the imidazoleglycerol-phosphate dehydratase family.

Its subcellular location is the cytoplasm. The catalysed reaction is D-erythro-1-(imidazol-4-yl)glycerol 3-phosphate = 3-(imidazol-4-yl)-2-oxopropyl phosphate + H2O. It participates in amino-acid biosynthesis; L-histidine biosynthesis; L-histidine from 5-phospho-alpha-D-ribose 1-diphosphate: step 6/9. The polypeptide is Imidazoleglycerol-phosphate dehydratase (Clostridium botulinum (strain ATCC 19397 / Type A)).